The primary structure comprises 191 residues: Calcium and integrin-binding protein 1 (191 aa).

G2 carries the N-myristoyl glycine lipid modification. EF-hand domains lie at 103–138 (TPDI…LTGE) and 148–183 (EMKQ…SPDF). Ca(2+) is bound by residues D116, D118, D120, T122, D127, D161, D163, D165, T167, and E172.

In terms of assembly, monomer. Interacts with the heterodimeric integrin alpha-IIb/beta3 (ITGA2B-ITGB3). Interacts with ITGA2B (via cytoplasmic domain); the interaction is direct and calcium-dependent. Interacts with the protein kinases PLK2/SNK and PRKDC (via the region immediately upstream of the kinase domain). Interacts with PLK3; the interaction inhibits PLK3 kinase activity. Interacts with PSEN2. Interacts (via C-terminus) with F8. Interacts with NBR1 (via C-terminus). Interacts with FEZ1 (via C-terminus). Interacts with UBR5 (via C-terminus); the interaction is sensitive to DNA damage, and may target CIB1 for ubiquitin-mediated degradation. Interacts with IFI6; the interaction is direct. Interacts with BCL2. Interacts with ITPR3; the interaction occurs in a calcium dependent manner. Interacts with PTK2/FAK1. Interacts with MAP3K5; the interaction inhibits MAP3K5 activation by phosphorylation, and its subsequent interaction with TRAF2. Interacts (via C-terminal region) with STMN2 (via the N-terminal region); the interaction is direct, occurs in a calcium-dependent manner and attenuates the STMN2-induced neurite outgrowth inhibition. Interacts with SPHK1, the interaction occurs in a calcium-dependent manner. Interacts with ITGA2B (via C-terminal cytoplasmic tail); the interaction occurs upon platelet aggregation and is stabilized/increased in a calcium and magnesium-dependent manner. Interacts with PAK1 (via N-terminal region); the interaction is direct and occurs in a calcium-dependent manner. Interacts with RAC3 (via C-terminal region); the interaction induces their association with the cytoskeleton upon alpha-IIb/beta3 integrin-mediated adhesion. Interacts with ITGA5 and ITGAV. Interacts with MYO1C. Interacts with ITGA2B (via C-terminal cytoplasmic tail region). Interacts (via C-terminal region) with PPP3R1; the interaction increases upon cardiomyocytes hypertrophy. Interacts with CACNA1C; the interaction increases upon cardiomyocytes hypertrophy. Interacts with TAS1R2 (via C-terminus); this interaction is independent of the myristoylation state of CIB1. Interacts and forms a complex with TMC6 and TMC8; the interaction stabilizes each component of the complex.

The protein localises to the membrane. Its subcellular location is the cell membrane. The protein resides in the sarcolemma. It is found in the apical cell membrane. It localises to the cell projection. The protein localises to the ruffle membrane. Its subcellular location is the filopodium tip. The protein resides in the growth cone. It is found in the lamellipodium. It localises to the cytoplasm. The protein localises to the cytoskeleton. Its subcellular location is the microtubule organizing center. The protein resides in the centrosome. It is found in the perinuclear region. It localises to the nucleus. The protein localises to the neuron projection. Its subcellular location is the perikaryon. Functionally, calcium-binding protein that plays a role in the regulation of numerous cellular processes, such as cell differentiation, cell division, cell proliferation, cell migration, thrombosis, angiogenesis, cardiac hypertrophy and apoptosis. Involved in bone marrow megakaryocyte differentiation by negatively regulating thrombopoietin-mediated signaling pathway. Participates in the endomitotic cell cycle of megakaryocyte, a form of mitosis in which both karyokinesis and cytokinesis are interrupted. Plays a role in integrin signaling by negatively regulating alpha-IIb/beta3 activation in thrombin-stimulated megakaryocytes preventing platelet aggregation. Up-regulates PTK2/FAK1 activity, and is also needed for the recruitment of PTK2/FAK1 to focal adhesions; it thus appears to play an important role in focal adhesion formation. Positively regulates cell migration on fibronectin in a CDC42-dependent manner, the effect being negatively regulated by PAK1. Functions as a negative regulator of stress activated MAP kinase (MAPK) signaling pathways. Down-regulates inositol 1,4,5-trisphosphate receptor-dependent calcium signaling. Involved in sphingosine kinase SPHK1 translocation to the plasma membrane in a N-myristoylation-dependent manner preventing TNF-alpha-induced apoptosis. Regulates serine/threonine-protein kinase PLK3 activity for proper completion of cell division progression. Plays a role in microtubule (MT) dynamics during neuronal development; disrupts the MT depolymerization activity of STMN2 attenuating NGF-induced neurite outgrowth and the MT reorganization at the edge of lamellipodia. Promotes cardiomyocyte hypertrophy via activation of the calcineurin/NFAT signaling pathway. Stimulates calcineurin PPP3R1 activity by mediating its anchoring to the sarcolemma. In ischemia-induced (pathological or adaptive) angiogenesis, stimulates endothelial cell proliferation, migration and microvessel formation by activating the PAK1 and ERK1/ERK2 signaling pathway. Also promotes cancer cell survival and proliferation. May regulate cell cycle and differentiation of spermatogenic germ cells, and/or differentiation of supporting Sertoli cells. Forms a complex with TMC6/EVER1 and TMC8/EVER2 in lymphocytes and keratynocytes where CIB1 stabilizes TMC6 and TMC8 levels and reciprocally. This chain is Calcium and integrin-binding protein 1 (CIB1), found in Bos taurus (Bovine).